A 343-amino-acid polypeptide reads, in one-letter code: S-adenosylmethionine:tRNA ribosyltransferase-isomerase (343 aa).

It belongs to the QueA family. Monomer.

Its subcellular location is the cytoplasm. It catalyses the reaction 7-aminomethyl-7-carbaguanosine(34) in tRNA + S-adenosyl-L-methionine = epoxyqueuosine(34) in tRNA + adenine + L-methionine + 2 H(+). The protein operates within tRNA modification; tRNA-queuosine biosynthesis. In terms of biological role, transfers and isomerizes the ribose moiety from AdoMet to the 7-aminomethyl group of 7-deazaguanine (preQ1-tRNA) to give epoxyqueuosine (oQ-tRNA). This Syntrophotalea carbinolica (strain DSM 2380 / NBRC 103641 / GraBd1) (Pelobacter carbinolicus) protein is S-adenosylmethionine:tRNA ribosyltransferase-isomerase.